The chain runs to 194 residues: uncharacterized protein (194 aa).

The protein belongs to the mimivirus L114/R131 family.

This is an uncharacterized protein from Acanthamoeba polyphaga mimivirus (APMV).